A 124-amino-acid chain; its full sequence is Large ribosomal subunit protein uL18 (124 aa).

This sequence belongs to the universal ribosomal protein uL18 family. In terms of assembly, part of the 50S ribosomal subunit; part of the 5S rRNA/L5/L18/L25 subcomplex. Contacts the 5S and 23S rRNAs.

In terms of biological role, this is one of the proteins that bind and probably mediate the attachment of the 5S RNA into the large ribosomal subunit, where it forms part of the central protuberance. This chain is Large ribosomal subunit protein uL18, found in Thermomicrobium roseum (strain ATCC 27502 / DSM 5159 / P-2).